The following is a 178-amino-acid chain: ATP synthase subunit delta (178 aa).

This sequence belongs to the ATPase delta chain family. F-type ATPases have 2 components, F(1) - the catalytic core - and F(0) - the membrane proton channel. F(1) has five subunits: alpha(3), beta(3), gamma(1), delta(1), epsilon(1). F(0) has three main subunits: a(1), b(2) and c(10-14). The alpha and beta chains form an alternating ring which encloses part of the gamma chain. F(1) is attached to F(0) by a central stalk formed by the gamma and epsilon chains, while a peripheral stalk is formed by the delta and b chains.

It is found in the cell inner membrane. Its function is as follows. F(1)F(0) ATP synthase produces ATP from ADP in the presence of a proton or sodium gradient. F-type ATPases consist of two structural domains, F(1) containing the extramembraneous catalytic core and F(0) containing the membrane proton channel, linked together by a central stalk and a peripheral stalk. During catalysis, ATP synthesis in the catalytic domain of F(1) is coupled via a rotary mechanism of the central stalk subunits to proton translocation. Functionally, this protein is part of the stalk that links CF(0) to CF(1). It either transmits conformational changes from CF(0) to CF(1) or is implicated in proton conduction. In Nitrosomonas eutropha (strain DSM 101675 / C91 / Nm57), this protein is ATP synthase subunit delta.